We begin with the raw amino-acid sequence, 127 residues long: MWKSILAIALGAALGALLRWFLGLKLNSLLPSIPPGTLLANLVGGYAIGAAIAYFAQAPGIAPEWRLLIITGFCGGLTTFSTFSAEVVTLLQEGRLGWAAGAIATHVGGSLLMTLLGLFSMNWMLGR.

The next 4 helical transmembrane spans lie at 4–24 (SILA…FLGL), 36–56 (GTLL…AYFA), 68–88 (LIIT…AEVV), and 99–119 (AAGA…LGLF). G75 and T78 together coordinate Na(+).

The protein belongs to the fluoride channel Fluc/FEX (TC 1.A.43) family.

The protein resides in the cell inner membrane. The enzyme catalyses fluoride(in) = fluoride(out). Its activity is regulated as follows. Na(+) is not transported, but it plays an essential structural role and its presence is essential for fluoride channel function. Fluoride-specific ion channel. Important for reducing fluoride concentration in the cell, thus reducing its toxicity. The chain is Fluoride-specific ion channel FluC from Pseudomonas paraeruginosa (strain DSM 24068 / PA7) (Pseudomonas aeruginosa (strain PA7)).